We begin with the raw amino-acid sequence, 442 residues long: tRNA modification GTPase MnmE (442 aa).

Arg24, Glu82, and Lys122 together coordinate (6S)-5-formyl-5,6,7,8-tetrahydrofolate. A TrmE-type G domain is found at 219-366 (GFKVALVGEP…LRRALKREIE (148 aa)). Asn229 is a K(+) binding site. GTP contacts are provided by residues 229 to 234 (NAGKST), 248 to 254 (TDIAGTT), and 273 to 276 (DTAG). A Mg(2+)-binding site is contributed by Ser233. K(+)-binding residues include Thr248, Ile250, and Thr253. Residue Thr254 coordinates Mg(2+). Residue Lys442 coordinates (6S)-5-formyl-5,6,7,8-tetrahydrofolate.

The protein belongs to the TRAFAC class TrmE-Era-EngA-EngB-Septin-like GTPase superfamily. TrmE GTPase family. Homodimer. Heterotetramer of two MnmE and two MnmG subunits. Requires K(+) as cofactor.

It is found in the cytoplasm. Its function is as follows. Exhibits a very high intrinsic GTPase hydrolysis rate. Involved in the addition of a carboxymethylaminomethyl (cmnm) group at the wobble position (U34) of certain tRNAs, forming tRNA-cmnm(5)s(2)U34. The polypeptide is tRNA modification GTPase MnmE (Agrobacterium fabrum (strain C58 / ATCC 33970) (Agrobacterium tumefaciens (strain C58))).